The chain runs to 451 residues: MSFVPGQENAGSRSSSGNRAGNGILKKTTWADQTERGNRGRRNHPKQTATTQPNAGSVVPHYSWFSGITQFQKGKEFQFAQGQGVPIASGIPASEQKGYWYRHNRRSFKTPDGQHKQLLPRWYFYYLGTGPHAGAEYGDDIEGVVWVASQQADTKTTADVVERDPSSHEAIPTRFAPGTVLPQGFYVEGSGRSAPASRSGSRSQSRGPNNRARSSSNQRQPASAVKPDMAEEIAALVLAKLGKDAGQPKQVTKQSAKEVRQKILTKPRQKRTPNKQCPVQQCFGKRGPNQNFGGSEMLKLGTSDPQFPILAELAPTPSAFFFGSKLELVKKNSGGADEPTKDVYELQYSGAIRFDSTLPGFETIMKVLTENLNAYQDQAGSVDLVSPKPPRRGRRQAQEKKDEVDNVSVAKPKSLVQRNVSRELTPEDRSLLAQILDDGVVPDGLEDDSNV.

The segment at 1–57 is disordered; it reads MSFVPGQENAGSRSSSGNRAGNGILKKTTWADQTERGNRGRRNHPKQTATTQPNAGS. Over residues 9–23 the composition is skewed to low complexity; that stretch reads NAGSRSSSGNRAGNG. Polar residues predominate over residues 46–55; it reads KQTATTQPNA. The interval 52–193 is RNA-binding; sequence QPNAGSVVPH…GFYVEGSGRS (142 aa). The CoV N NTD domain occupies 60–189; the sequence is PHYSWFSGIT…VLPQGFYVEG (130 aa). RNA contacts are provided by arginine 105, arginine 121, and arginine 163. Disordered regions lie at residues 155–227, 266–288, and 379–423; these read KTTA…AVKP, KPRQ…KRGP, and AGSV…VSRE. Phosphoserine; by host is present on serine 166. Threonine 173 carries the phosphothreonine; by host modification. A compositionally biased stretch (low complexity) spans 189–208; it reads GSGRSAPASRSGSRSQSRGP. At serine 190 the chain carries Phosphoserine; by host. Polar residues predominate over residues 211–221; the sequence is RARSSSNQRQP. Residues 256-379 form the CoV N CTD domain; the sequence is AKEVRQKILT…ENLNAYQDQA (124 aa). Residues 263-380 form a dimerization region; it reads ILTKPRQKRT…NLNAYQDQAG (118 aa). Phosphoserine; by host occurs at positions 386 and 421. Threonine 425 bears the Phosphothreonine; by host mark.

This sequence belongs to the betacoronavirus nucleocapsid protein family. In terms of assembly, homooligomer. Both monomeric and oligomeric forms interact with RNA. Interacts with protein M. Interacts with NSP3; this interaction serves to tether the genome to the newly translated replicase-transcriptase complex at a very early stage of infection. Post-translationally, ADP-ribosylated. The ADP-ribosylation is retained in the virion during infection. Phosphorylated on serine and threonine residues.

The protein resides in the virion. The protein localises to the host endoplasmic reticulum-Golgi intermediate compartment. Its subcellular location is the host Golgi apparatus. Its function is as follows. Packages the positive strand viral genome RNA into a helical ribonucleocapsid (RNP) and plays a fundamental role during virion assembly through its interactions with the viral genome and membrane protein M. Plays an important role in enhancing the efficiency of subgenomic viral RNA transcription as well as viral replication. This is Nucleoprotein from Murine coronavirus (strain 2) (MHV-2).